Reading from the N-terminus, the 105-residue chain is Protein E7 (105 aa).

The tract at residues 1 to 45 (MHGKVPTLQDVVLELTPQTEIDLQCNEQLDSSEDEDEDEVDHLQE) is E7 terminal domain. Residues 23-27 (LQCNE) carry the LXCXE motif; interaction with host RB1 and TMEM173/STING motif. The segment at 29-48 (LDSSEDEDEDEVDHLQERPQ) is disordered. Over residues 30–40 (DSSEDEDEDEV) the composition is skewed to acidic residues. A zinc finger spans residues 65 to 101 (CCECKFVVQLDIQSTKEDLRVVQQLLMGALTVTCPLC). The short motif at 83 to 91 (LRVVQQLLM) is the Nuclear export signal element.

Belongs to the papillomaviridae E7 protein family. Homodimer. Homooligomer. Interacts with host RB1; this interaction induces dissociation of RB1-E2F1 complex thereby disrupting RB1 activity. Interacts with host EP300; this interaction represses EP300 transcriptional activity. Interacts with protein E2; this interaction inhibits E7 oncogenic activity. Interacts with host TMEM173/STING; this interaction impairs the ability of TMEM173/STING to sense cytosolic DNA and promote the production of type I interferon (IFN-alpha and IFN-beta). Highly phosphorylated.

The protein resides in the host cytoplasm. Its subcellular location is the host nucleus. In terms of biological role, plays a role in viral genome replication by driving entry of quiescent cells into the cell cycle. Stimulation of progression from G1 to S phase allows the virus to efficiently use the cellular DNA replicating machinery to achieve viral genome replication. E7 protein has both transforming and trans-activating activities. Induces the disassembly of the E2F1 transcription factor from RB1, with subsequent transcriptional activation of E2F1-regulated S-phase genes. Interferes with host histone deacetylation mediated by HDAC1 and HDAC2, leading to transcription activation. Also plays a role in the inhibition of both antiviral and antiproliferative functions of host interferon alpha. Interaction with host TMEM173/STING impairs the ability of TMEM173/STING to sense cytosolic DNA and promote the production of type I interferon (IFN-alpha and IFN-beta). This Human papillomavirus 56 protein is Protein E7.